Reading from the N-terminus, the 79-residue chain is Small ribosomal subunit protein bS18 (79 aa).

This sequence belongs to the bacterial ribosomal protein bS18 family. Part of the 30S ribosomal subunit. Forms a tight heterodimer with protein bS6.

Binds as a heterodimer with protein bS6 to the central domain of the 16S rRNA, where it helps stabilize the platform of the 30S subunit. In Bradyrhizobium diazoefficiens (strain JCM 10833 / BCRC 13528 / IAM 13628 / NBRC 14792 / USDA 110), this protein is Small ribosomal subunit protein bS18.